The sequence spans 166 residues: Monothiol glutaredoxin-3 (166 aa).

The region spanning 56–159 (DSTDFEVFLE…STLDEWTHNK (104 aa)) is the Glutaredoxin domain. Cys-76 provides a ligand contact to [2Fe-2S] cluster.

It belongs to the glutaredoxin family. Monothiol subfamily. Homodimer.

The protein localises to the nucleus. Functionally, monothiol glutaredoxin involved in the biogenesis of iron-sulfur clusters. Binds one iron-sulfur cluster per dimer. The iron-sulfur cluster is bound between subunits, and is complexed by a bound glutathione and a cysteine residue from each subunit. This is Monothiol glutaredoxin-3 (grx3) from Schizosaccharomyces pombe (strain 972 / ATCC 24843) (Fission yeast).